The chain runs to 174 residues: Translation initiation factor IF-3 (174 aa).

It belongs to the IF-3 family. As to quaternary structure, monomer.

It is found in the cytoplasm. IF-3 binds to the 30S ribosomal subunit and shifts the equilibrium between 70S ribosomes and their 50S and 30S subunits in favor of the free subunits, thus enhancing the availability of 30S subunits on which protein synthesis initiation begins. The chain is Translation initiation factor IF-3 from Helicobacter hepaticus (strain ATCC 51449 / 3B1).